The following is a 714-amino-acid chain: K(+)-insensitive pyrophosphate-energized proton pump (714 aa).

Residues 1 to 20 (MRMTVIPIVILCGVLSVVYA) form the signal peptide. The next 4 membrane-spanning stretches (helical) occupy residues 52–74 (LTRQYLTIAIVGLIVAVLAWYLL), 85–105 (GAVLSGVAGFVGMHVSVRANL), 128–148 (ITGMLVAGLALLGVSIYYFVL), and 166–186 (VSLGFGASLISIFARLGGGIF). Position 188 (K188) interacts with substrate. Mg(2+)-binding residues include D191, D195, N218, and D221. Transmembrane regions (helical) follow at residues 238 to 258 (AVSVVATMVLAAIFFAGTPIL), 263 to 283 (VYPLAICGACILTSIAGTFFV), 298 to 318 (GLIATGVFSVAGLAVATYATV), 333 to 353 (GTNLFFCGLVGLVVTALIVVI), 383 to 403 (GLAVSLESTALPAIVIVGGII), and 411 to 431 (LFGTGIAVTAMLGLAGMIVAL). D439 provides a ligand contact to Mg(2+). 4 consecutive transmembrane segments (helical) span residues 470-490 (AVTKGYAIGSAGLGALVLFAA), 522-542 (YVVAGLLFGGLIPYLFGGIAM), 591-611 (VIPSLLPVLAPLVVYFGVLLI), and 618-638 (AFAALGASLLGVIINGLFVAI). Ca(2+)-binding residues include D648, D680, and D684. K687 lines the substrate pocket. The chain crosses the membrane as a helical span at residues 693–713 (AVNPAIKITNIVALLLLAVLA).

Belongs to the H(+)-translocating pyrophosphatase (TC 3.A.10) family. K(+)-insensitive subfamily. In terms of assembly, homodimer. The cofactor is Mg(2+).

It localises to the acidocalcisome membrane. The enzyme catalyses diphosphate + H2O + H(+)(in) = 2 phosphate + 2 H(+)(out). In terms of biological role, proton pump that utilizes the energy of pyrophosphate hydrolysis as the driving force for proton movement across the membrane. Generates a proton motive force. The protein is K(+)-insensitive pyrophosphate-energized proton pump of Agrobacterium fabrum (strain C58 / ATCC 33970) (Agrobacterium tumefaciens (strain C58)).